We begin with the raw amino-acid sequence, 224 residues long: uncharacterized protein (224 aa).

A disordered region spans residues Glu203–Val224. Basic residues predominate over residues Leu204–Lys214. Positions Pro215 to Val224 are enriched in basic and acidic residues.

This is an uncharacterized protein from Mycoplasma genitalium (strain ATCC 33530 / DSM 19775 / NCTC 10195 / G37) (Mycoplasmoides genitalium).